Here is a 96-residue protein sequence, read N- to C-terminus: Large ribosomal subunit protein eL14 (96 aa).

This sequence belongs to the eukaryotic ribosomal protein eL14 family.

This is Large ribosomal subunit protein eL14 from Saccharolobus solfataricus (strain ATCC 35092 / DSM 1617 / JCM 11322 / P2) (Sulfolobus solfataricus).